The sequence spans 1232 residues: Protein transport protein sec-16A.1 (1232 aa).

6 disordered regions span residues 18–134 (GASG…SGYA), 172–193 (RNGFVYDSGESDKTSEELEEDE), 815–843 (PVQESQQHVPQPQPVENKSISSEAKKWHD), 866–942 (KPIA…VVPE), 972–1069 (QPIP…PQKQ), and 1140–1232 (PHLM…QNND). Residues 26–37 (DWNNPYNASPPS) are compositionally biased toward polar residues. Residues 67–76 (RPILIQPARP) show a composition bias toward low complexity. Polar residues predominate over residues 78-100 (SQKSNRQGTGMSNGSRGLNSTFN). Residues 817-836 (QESQQHVPQPQPVENKSISS) are compositionally biased toward polar residues. Residues 896–914 (SSVTVAASASRTSTLTSST) show a composition bias toward low complexity. Composition is skewed to polar residues over residues 1046–1060 (QQATLGQASIPNAKT), 1149–1159 (SNKSSTNSLRS), and 1168–1178 (YLQSGMATSQA). The span at 1194-1203 (PMSFSFMPAP) shows a compositional bias: low complexity. Over residues 1222-1232 (PSESLSKQNND) the composition is skewed to polar residues.

It belongs to the SEC16 family. As to quaternary structure, interacts with tfg-1 (via N-terminus); the interaction is direct and is required for both the localization of tfg-1 and to maintain the distribution of sec-16A.1 at endoplasmic reticulum exit sites (ERES).

Its subcellular location is the endoplasmic reticulum. The protein resides in the endoplasmic reticulum-Golgi intermediate compartment. Its function is as follows. Plays a role in the organization of the endoplasmic reticulum exit sites (ERES), also known as transitional endoplasmic reticulum (tER). In association with tfg-1, accumulates at ERES to positively regulate secretory cargo trafficking from the endoplasmic reticulum to the endoplasmic reticulum-Golgi intermediate compartment (ERGIC) and Golgi apparatus. The polypeptide is Protein transport protein sec-16A.1 (Caenorhabditis elegans).